We begin with the raw amino-acid sequence, 346 residues long: NADH-cytochrome b5 reductase 2 (346 aa).

The helical transmembrane segment at 28-50 threads the bilayer; the sequence is GGSNAALYAGLAAAAGAGAYYFL. The 106-residue stretch at 95 to 200 folds into the FAD-binding FR-type domain; the sequence is QGFISLKLDS…KGPIPKYPWS (106 aa). Residue 203-238 coordinates FAD; sequence KHDHIALIAGGTGITPMYQLARAIFNNPADKTKVTL.

Belongs to the flavoprotein pyridine nucleotide cytochrome reductase family. FAD is required as a cofactor.

It localises to the mitochondrion outer membrane. It catalyses the reaction 2 Fe(III)-[cytochrome b5] + NADH = 2 Fe(II)-[cytochrome b5] + NAD(+) + H(+). Functionally, may mediate the reduction of outer membrane cytochrome b5. This chain is NADH-cytochrome b5 reductase 2 (mcr1), found in Botryotinia fuckeliana (strain B05.10) (Noble rot fungus).